A 239-amino-acid polypeptide reads, in one-letter code: Large ribosomal subunit protein uL1 (239 aa).

This sequence belongs to the universal ribosomal protein uL1 family. Part of the 50S ribosomal subunit.

In terms of biological role, binds directly to 23S rRNA. The L1 stalk is quite mobile in the ribosome, and is involved in E site tRNA release. Functionally, protein L1 is also a translational repressor protein, it controls the translation of the L11 operon by binding to its mRNA. The sequence is that of Large ribosomal subunit protein uL1 from Rickettsia akari (strain Hartford).